The following is a 117-amino-acid chain: Ribosome-binding factor A (117 aa).

The protein belongs to the RbfA family. As to quaternary structure, monomer. Binds 30S ribosomal subunits, but not 50S ribosomal subunits or 70S ribosomes.

It localises to the cytoplasm. Its function is as follows. One of several proteins that assist in the late maturation steps of the functional core of the 30S ribosomal subunit. Associates with free 30S ribosomal subunits (but not with 30S subunits that are part of 70S ribosomes or polysomes). Required for efficient processing of 16S rRNA. May interact with the 5'-terminal helix region of 16S rRNA. In Bacillus licheniformis (strain ATCC 14580 / DSM 13 / JCM 2505 / CCUG 7422 / NBRC 12200 / NCIMB 9375 / NCTC 10341 / NRRL NRS-1264 / Gibson 46), this protein is Ribosome-binding factor A.